Here is a 1071-residue protein sequence, read N- to C-terminus: Carbamoyl phosphate synthase pyrimidine-specific large chain (1071 aa).

Residues 1–401 (MPKRVDINKI…SLLKAVRSLE (401 aa)) form a carboxyphosphate synthetic domain region. ATP-binding residues include Arg129, Arg169, Gly175, Gly176, Lys208, Ile210, Glu215, Gly241, Ile242, His243, Gln284, and Glu298. An ATP-grasp 1 domain is found at 133 to 327 (RTLMNELNEP…IAKLAAKIAV (195 aa)). Mg(2+)-binding residues include Gln284, Glu298, and Asn300. Mn(2+) contacts are provided by Gln284, Glu298, and Asn300. Residues 402-546 (ADVYHLELKD…YSTYEEENES (145 aa)) are oligomerization domain. The segment at 547-929 (VVTDKKSVMV…ALYKALIASG (383 aa)) is carbamoyl phosphate synthetic domain. The ATP-grasp 2 domain occupies 671–861 (EQALGELGVP…MANLATKIIL (191 aa)). 10 residues coordinate ATP: Arg707, Arg746, Leu748, Glu752, Gly777, Val778, His779, Ser780, Gln820, and Glu832. Residues Gln820, Glu832, and Asn834 each contribute to the Mg(2+) site. 3 residues coordinate Mn(2+): Gln820, Glu832, and Asn834. In terms of domain architecture, MGS-like spans 930–1071 (IQIPNYGSVL…NTNQEAAVTI (142 aa)). The allosteric domain stretch occupies residues 930 to 1071 (IQIPNYGSVL…NTNQEAAVTI (142 aa)).

The protein belongs to the CarB family. In terms of assembly, composed of two chains; the small (or glutamine) chain promotes the hydrolysis of glutamine to ammonia, which is used by the large (or ammonia) chain to synthesize carbamoyl phosphate. Tetramer of heterodimers (alpha,beta)4. Interacts with BrxC. Mg(2+) serves as cofactor. Requires Mn(2+) as cofactor.

It carries out the reaction hydrogencarbonate + L-glutamine + 2 ATP + H2O = carbamoyl phosphate + L-glutamate + 2 ADP + phosphate + 2 H(+). The catalysed reaction is hydrogencarbonate + NH4(+) + 2 ATP = carbamoyl phosphate + 2 ADP + phosphate + 2 H(+). It functions in the pathway amino-acid biosynthesis; L-arginine biosynthesis; carbamoyl phosphate from bicarbonate: step 1/1. The protein operates within pyrimidine metabolism; UMP biosynthesis via de novo pathway; (S)-dihydroorotate from bicarbonate: step 1/3. Its function is as follows. Small subunit of the glutamine-dependent carbamoyl phosphate synthetase (CPSase). CPSase catalyzes the formation of carbamoyl phosphate from the ammonia moiety of glutamine, carbonate, and phosphate donated by ATP, constituting the first step of the biosynthetic pathway leading to pyrimidine nucleotides. The large subunit (synthetase) binds the substrates ammonia (free or transferred from glutamine from the small subunit), hydrogencarbonate and ATP and carries out an ATP-coupled ligase reaction, activating hydrogencarbonate by forming carboxy phosphate which reacts with ammonia to form carbamoyl phosphate. This chain is Carbamoyl phosphate synthase pyrimidine-specific large chain (pyrAB), found in Bacillus subtilis (strain 168).